Reading from the N-terminus, the 393-residue chain is Iripin-3 (393 aa).

Positions 1 to 16 are cleaved as a signal peptide; the sequence is MKVITAFLSVFVLCSA. 2 N-linked (GlcNAc...) asparagine glycosylation sites follow: Asn104 and Asn265.

It belongs to the serpin family. Interacts with human KLKB1. Interacts with human ST14. Interacts with human F2 (thrombin). In terms of tissue distribution, saliva (at protein level). Expressed in salivary gland. Expressed in ovary during blood feeding.

The protein resides in the secreted. Its function is as follows. Serine protease inhibitor that modulates blood feeding of ticks on vertebrate species. Moderately inhibits host plasma kallikrein (KLKB1), matriptase (ST14), trypsin, plasmin (PLG), thrombin (F2) and coagulation factor VIIa (F7). Slightly inhibits host alpha-chymotrypsin, tPA/tissue-type plasminogen activator (PLAT), uPA/urokinase-type plasminogen activator (PLAU) and coagulation factor XIIa (F12). Slightly inhibits the extrinsic pathway while not affecting the intrinsic and common pathways of host blood coagulation. Decreases synthesis and secretion of IL6 by mouse bone marrow-derived macrophages. Decreases viability of mouse B- and T-cells. Decreases proliferation of mouse CD4+ T-cells in response to stimulation. Inhibits Th1 immune responses in mouse cells. Promotes differentiation of mouse regulatory T-cells. This is Iripin-3 from Ixodes ricinus (Common tick).